Here is an 84-residue protein sequence, read N- to C-terminus: Putative membrane protein insertion efficiency factor (84 aa).

Belongs to the UPF0161 family.

Its subcellular location is the cell inner membrane. Could be involved in insertion of integral membrane proteins into the membrane. The polypeptide is Putative membrane protein insertion efficiency factor (Shewanella denitrificans (strain OS217 / ATCC BAA-1090 / DSM 15013)).